The sequence spans 349 residues: Phenylalanine--tRNA ligase alpha subunit (349 aa).

Glutamate 259 contacts Mg(2+).

This sequence belongs to the class-II aminoacyl-tRNA synthetase family. Phe-tRNA synthetase alpha subunit type 1 subfamily. As to quaternary structure, tetramer of two alpha and two beta subunits. Requires Mg(2+) as cofactor.

It is found in the cytoplasm. It catalyses the reaction tRNA(Phe) + L-phenylalanine + ATP = L-phenylalanyl-tRNA(Phe) + AMP + diphosphate + H(+). This is Phenylalanine--tRNA ligase alpha subunit from Lactobacillus johnsonii (strain CNCM I-12250 / La1 / NCC 533).